Reading from the N-terminus, the 409-residue chain is N-acetylglucosamine-6-phosphate deacetylase (409 aa).

A divalent metal cation is bound at residue E143. 154–155 (AH) is a substrate binding site. Positions 211 and 232 each coordinate a divalent metal cation. Substrate contacts are provided by residues 235–236 (NA), R243, and 269–272 (DGIH). D294 (proton donor/acceptor) is an active-site residue. 328-330 (LGG) lines the substrate pocket.

The protein belongs to the metallo-dependent hydrolases superfamily. NagA family. The cofactor is a divalent metal cation.

It catalyses the reaction N-acetyl-D-glucosamine 6-phosphate + H2O = D-glucosamine 6-phosphate + acetate. It functions in the pathway amino-sugar metabolism; N-acetylneuraminate degradation. Its function is as follows. Hydrolyzes the N-glycolyl group from N-glycolylglucosamine 6-phosphate (GlcNGc-6-P) in the N-glycolylneuraminic acid (Neu5Gc) degradation pathway. In Mus musculus (Mouse), this protein is N-acetylglucosamine-6-phosphate deacetylase (Amdhd2).